The sequence spans 274 residues: uncharacterized protein (274 aa).

This is an uncharacterized protein from Mycobacterium tuberculosis (strain ATCC 25618 / H37Rv).